Here is a 65-residue protein sequence, read N- to C-terminus: MTEASAPLIDVDPRLLEVLVCPVTRGPLEYDRAKGELISRAAKLAYPIRDGVPIMLPEEARELEG.

This sequence belongs to the UPF0434 family.

In Caulobacter vibrioides (strain ATCC 19089 / CIP 103742 / CB 15) (Caulobacter crescentus), this protein is UPF0434 protein CC_0108.